Reading from the N-terminus, the 253-residue chain is Proteasome subunit alpha (253 aa).

The interval 229–253 (ADESQSYIDDIEDAADDSDDDDDEE) is disordered. Residues 237–253 (DDIEDAADDSDDDDDEE) are compositionally biased toward acidic residues.

It belongs to the peptidase T1A family. The 20S proteasome core is composed of 14 alpha and 14 beta subunits that assemble into four stacked heptameric rings, resulting in a barrel-shaped structure. The two inner rings, each composed of seven catalytic beta subunits, are sandwiched by two outer rings, each composed of seven alpha subunits. The catalytic chamber with the active sites is on the inside of the barrel. Has a gated structure, the ends of the cylinder being occluded by the N-termini of the alpha-subunits. Is capped at one or both ends by the proteasome regulatory ATPase, PAN.

It localises to the cytoplasm. With respect to regulation, the formation of the proteasomal ATPase PAN-20S proteasome complex, via the docking of the C-termini of PAN into the intersubunit pockets in the alpha-rings, triggers opening of the gate for substrate entry. Interconversion between the open-gate and close-gate conformations leads to a dynamic regulation of the 20S proteasome proteolysis activity. Functionally, component of the proteasome core, a large protease complex with broad specificity involved in protein degradation. This chain is Proteasome subunit alpha, found in Halobacterium salinarum (strain ATCC 29341 / DSM 671 / R1).